Reading from the N-terminus, the 265-residue chain is Acetylglutamate kinase (265 aa).

Residues 41-42 (GG), arginine 63, and asparagine 156 contribute to the substrate site.

The protein belongs to the acetylglutamate kinase family. ArgB subfamily.

It localises to the cytoplasm. It catalyses the reaction N-acetyl-L-glutamate + ATP = N-acetyl-L-glutamyl 5-phosphate + ADP. The protein operates within amino-acid biosynthesis; L-arginine biosynthesis; N(2)-acetyl-L-ornithine from L-glutamate: step 2/4. Catalyzes the ATP-dependent phosphorylation of N-acetyl-L-glutamate. The sequence is that of Acetylglutamate kinase from Brevibacillus brevis (strain 47 / JCM 6285 / NBRC 100599).